Here is a 447-residue protein sequence, read N- to C-terminus: Phosphoglucosamine mutase (447 aa).

S101 (phosphoserine intermediate) is an active-site residue. S101, D242, D244, and D246 together coordinate Mg(2+). At S101 the chain carries Phosphoserine.

This sequence belongs to the phosphohexose mutase family. Mg(2+) is required as a cofactor. Post-translationally, activated by phosphorylation.

The enzyme catalyses alpha-D-glucosamine 1-phosphate = D-glucosamine 6-phosphate. Catalyzes the conversion of glucosamine-6-phosphate to glucosamine-1-phosphate. This is Phosphoglucosamine mutase from Xanthobacter autotrophicus (strain ATCC BAA-1158 / Py2).